The chain runs to 566 residues: MKQSKVFIPTRRDVPAEAEALSHQLLLKAGLIKQSTSGIYSYLPLASRVLNNISKIIREEMESIDAVEILMPALQQAELWEESGRWGAYGPELMRLKDRNGREFALGPTHEEVVTSIVRDELKSYKQLPLTLFQIQSKFRDEKRPRFGLLRGREFIMKDAYSFHADEASLDETYQDMYNAYDRIFKRVGINARPVVADSGAIGGNHTHEFMALSEIGEDTIVYSEHSDYAANIEKAEVVYHPNEKHTEVAELEKVETPNVKTAQELADFLNRPVDEIVKSMIFKIDGEFIMFLIRGHHELNDVKVKAFFETDNVEMATQEEIVNLLGANPGSLGPVHDKDIRIFADNYVRDLNNLVVGANEDGSHYINANLDRDFKVDEFGDFRFILEGETLSDGSGEAKFAEGIEVGQVFKLGTKYSEAMNATFLDNQGKAKPLIMGCYGIGVSRTLSAIVEQNNDENGIIWPKSVTPFDLHLITINPKKDEQLELGDQLYKELQQQYDVLYDDRKDRAGVKFNDADLIGLPIRIVVGKNASEGIVEVKVRQTGESEEVHINDLNTHIATLYSNL.

It belongs to the class-II aminoacyl-tRNA synthetase family. ProS type 1 subfamily. As to quaternary structure, homodimer.

It localises to the cytoplasm. The catalysed reaction is tRNA(Pro) + L-proline + ATP = L-prolyl-tRNA(Pro) + AMP + diphosphate. Catalyzes the attachment of proline to tRNA(Pro) in a two-step reaction: proline is first activated by ATP to form Pro-AMP and then transferred to the acceptor end of tRNA(Pro). As ProRS can inadvertently accommodate and process non-cognate amino acids such as alanine and cysteine, to avoid such errors it has two additional distinct editing activities against alanine. One activity is designated as 'pretransfer' editing and involves the tRNA(Pro)-independent hydrolysis of activated Ala-AMP. The other activity is designated 'posttransfer' editing and involves deacylation of mischarged Ala-tRNA(Pro). The misacylated Cys-tRNA(Pro) is not edited by ProRS. The protein is Proline--tRNA ligase of Staphylococcus haemolyticus (strain JCSC1435).